We begin with the raw amino-acid sequence, 520 residues long: Diacylglycerol O-acyltransferase 1 (520 aa).

2 disordered regions span residues 28 to 57 and 72 to 116; these read RRKS…GAPA and QGTA…AHRR. Positions 34 to 54 are enriched in low complexity; that stretch reads DSSNGLLLSGSDNNSPSDDVG. Residues 81 to 98 are compositionally biased toward gly residues; the sequence is NNGGGDNNGGGRGGGEGR. Transmembrane regions (helical) follow at residues 126 to 146, 176 to 196, 207 to 227, 233 to 253, 276 to 296, 317 to 337, and 365 to 385; these read AIFK…LIAV, WPLF…FTVE, PVVI…PVYV, SAFL…LKLV, VSYY…TLCY, KLVI…NPIV, and VWLC…AELL. Positions 392 to 398 match the FYXDWWN motif motif; the sequence is FYKDWWN. A run of 3 helical transmembrane segments spans residues 434-454, 457-477, and 487-507; these read LAII…IAVP, LFKL…FITN, and VGNM…CVLL. The active site involves histidine 447.

It belongs to the membrane-bound acyltransferase family. Sterol o-acyltransferase subfamily. Interacts with LPCAT2 and LPAT2. Ubiquitous. Highest expression in young developing seeds.

Its subcellular location is the plastid. The protein localises to the chloroplast membrane. The protein resides in the endoplasmic reticulum membrane. It catalyses the reaction an acyl-CoA + a 1,2-diacyl-sn-glycerol = a triacyl-sn-glycerol + CoA. The catalysed reaction is 1,2-di-(9Z-octadecenoyl)-sn-glycerol + (9Z)-octadecenoyl-CoA = 1,2,3-tri-(9Z-octadecenoyl)-glycerol + CoA. The protein operates within glycerolipid metabolism; triacylglycerol biosynthesis. Its activity is regulated as follows. Partially inhibited by niacin. Major contributor to triacylglycerol (TAG) synthesis and oil accumulation in seeds. Catalyzes the acylation of the sn-3 hydroxy group of sn-1,2-diacylglycerol using acyl-CoA. Can use palmitoyl-CoA and oleoyl-CoA as substrates. Can use oleoyl-CoA and linoleoyl-CoA as substrates. Has substrate preference for oleoyl-CoA compared to linoleoyl-CoA. Has complementary functions with PDAT1 that are essential for triacylglycerol synthesis and normal development of both seeds and pollen. In Arabidopsis thaliana (Mouse-ear cress), this protein is Diacylglycerol O-acyltransferase 1.